We begin with the raw amino-acid sequence, 178 residues long: Gluconokinase (178 aa).

Glycine 19–threonine 26 lines the ATP pocket.

Belongs to the gluconokinase GntK/GntV family. In terms of assembly, monomer.

It catalyses the reaction D-gluconate + ATP = 6-phospho-D-gluconate + ADP + H(+). The protein operates within carbohydrate acid metabolism; D-gluconate degradation. Activated by magnesium. Its function is as follows. Phosphorylates gluconate to 6-phosphogluconate. The protein is Gluconokinase of Gluconobacter oxydans (strain 621H) (Gluconobacter suboxydans).